The sequence spans 804 residues: MDFSHKAIEKKWQKYWKENNIYKTTNNSEKKAYILDMFPYPSGAGLHVGHIKGYTATDVYSRFKRMQGYDVLHPIGWDAFGLPAEQYALKTGNDPREFTLQNIENFKIQLNKMGFSYDYDKEINTADPNYYKTTQWIFKQLYKKGLAENRDIDVNWCQELGTVLANDEIIEKDGLMVSERGEYPVVKKKMRQWVLKITDYADKLLDGLDNLDWPNSVKELQRNWIGKSEGCEINFKSNDINIPVFTTRADTIFGVTYIVLASENELVLKLTAPEKLEEVKKYIELTANKSEIERKDESRTKTGVFIGSYATNPLTKEQIQIWISDYVLNDYGSGAIMAVPAHDKRDWDFAAKFNLPIKFVIQTKDQSKAFVGEGIHINSEFLNDLDRIQALQVIHDYVDKNNLGKRKINYKLRDWLFSRQRFYGEPFPVLYDKDNNIVLIEDNNLPITLPITDYIKPTNTGESPLANVKNWVNVKIGDKEYKRETNTMPQSAASSWYFIAYILANSKNNLIDLTSDEAKKRLEKWLPVDLYIGGQEHAVGHLLYARFWTHFLYDLGLLPTNEPFKRLFNQGMILGPDNRKMSKSWGNVINPDDVIDTHGADALRLYEMFMGPLDASLPWSFDGLDASLKWLNRCYRMINKIEFSNTNNHKLDYVYNDVVKKVTQMIQELKFNTAISQLMVLVNAIYKEELNTVYKPYIEGFVKMLSLFAPHLSEELWEKLGNNSSVTLQTWPEFDETKIIKNAVVIALQVNGKLRSTIEVEKGTDKETLIKLAQENENIIRFIKDHKNLKYIAVVDRIVNIVIE.

Positions 39–50 match the 'HIGH' region motif; it reads PYPSGAGLHVGH. A 'KMSKS' region motif is present at residues 580-584; it reads KMSKS. Lys-583 contacts ATP.

The protein belongs to the class-I aminoacyl-tRNA synthetase family.

It localises to the cytoplasm. It catalyses the reaction tRNA(Leu) + L-leucine + ATP = L-leucyl-tRNA(Leu) + AMP + diphosphate. The chain is Leucine--tRNA ligase from Mycoplasma mycoides subsp. mycoides SC (strain CCUG 32753 / NCTC 10114 / PG1).